Here is a 114-residue protein sequence, read N- to C-terminus: NADH-quinone oxidoreductase subunit K 2 (114 aa).

3 helical membrane-spanning segments follow: residues 1–21, 29–49, and 62–82; these read MIVP…LGVF, LIMI…AFIG, and FVLF…AIIV.

Belongs to the complex I subunit 4L family. In terms of assembly, NDH-1 is composed of 14 different subunits. Subunits NuoA, H, J, K, L, M, N constitute the membrane sector of the complex.

Its subcellular location is the cell inner membrane. It catalyses the reaction a quinone + NADH + 5 H(+)(in) = a quinol + NAD(+) + 4 H(+)(out). Functionally, NDH-1 shuttles electrons from NADH, via FMN and iron-sulfur (Fe-S) centers, to quinones in the respiratory chain. The immediate electron acceptor for the enzyme in this species is believed to be ubiquinone. Couples the redox reaction to proton translocation (for every two electrons transferred, four hydrogen ions are translocated across the cytoplasmic membrane), and thus conserves the redox energy in a proton gradient. This is NADH-quinone oxidoreductase subunit K 2 from Syntrophobacter fumaroxidans (strain DSM 10017 / MPOB).